A 180-amino-acid polypeptide reads, in one-letter code: ATP-dependent protease subunit HslV (180 aa).

Thr-10 is a catalytic residue. 3 residues coordinate Na(+): Gly-165, Cys-168, and Thr-171.

It belongs to the peptidase T1B family. HslV subfamily. In terms of assembly, a double ring-shaped homohexamer of HslV is capped on each side by a ring-shaped HslU homohexamer. The assembly of the HslU/HslV complex is dependent on binding of ATP.

Its subcellular location is the cytoplasm. It catalyses the reaction ATP-dependent cleavage of peptide bonds with broad specificity.. Its activity is regulated as follows. Allosterically activated by HslU binding. Its function is as follows. Protease subunit of a proteasome-like degradation complex believed to be a general protein degrading machinery. The protein is ATP-dependent protease subunit HslV of Koribacter versatilis (strain Ellin345).